A 529-amino-acid polypeptide reads, in one-letter code: Bifunctional purine biosynthesis protein PurH (529 aa).

Residues 1-148 (MQQRRPVRRA…KNHKDVAIVV (148 aa)) form the MGS-like domain. N6-acetyllysine is present on lysine 287.

The protein belongs to the PurH family.

It catalyses the reaction (6R)-10-formyltetrahydrofolate + 5-amino-1-(5-phospho-beta-D-ribosyl)imidazole-4-carboxamide = 5-formamido-1-(5-phospho-D-ribosyl)imidazole-4-carboxamide + (6S)-5,6,7,8-tetrahydrofolate. The enzyme catalyses IMP + H2O = 5-formamido-1-(5-phospho-D-ribosyl)imidazole-4-carboxamide. It participates in purine metabolism; IMP biosynthesis via de novo pathway; 5-formamido-1-(5-phospho-D-ribosyl)imidazole-4-carboxamide from 5-amino-1-(5-phospho-D-ribosyl)imidazole-4-carboxamide (10-formyl THF route): step 1/1. The protein operates within purine metabolism; IMP biosynthesis via de novo pathway; IMP from 5-formamido-1-(5-phospho-D-ribosyl)imidazole-4-carboxamide: step 1/1. This Escherichia coli O157:H7 protein is Bifunctional purine biosynthesis protein PurH.